Reading from the N-terminus, the 209-residue chain is Ubiquitin-conjugating enzyme E2 S (209 aa).

Positions 14 to 160 (QTIRQVMREL…ARMMTEIHAQ (147 aa)) constitute a UBC core domain. Cysteine 98 functions as the Glycyl thioester intermediate in the catalytic mechanism. Positions 168–194 (AVGDAKDDGGPSTKKHAGLDKKLQDKK) are disordered. Positions 184–194 (AGLDKKLQDKK) are enriched in basic and acidic residues.

The protein belongs to the ubiquitin-conjugating enzyme family.

It catalyses the reaction S-ubiquitinyl-[E1 ubiquitin-activating enzyme]-L-cysteine + [E2 ubiquitin-conjugating enzyme]-L-cysteine = [E1 ubiquitin-activating enzyme]-L-cysteine + S-ubiquitinyl-[E2 ubiquitin-conjugating enzyme]-L-cysteine.. Its pathway is protein modification; protein ubiquitination. Catalyzes the covalent attachment of ubiquitin to other proteins. Acts as an essential factor of the anaphase promoting complex/cyclosome (APC/C), a cell cycle-regulated ubiquitin ligase that controls progression through mitosis. Acts by specifically elongating polyubiquitin chains initiated by the E2 enzyme vih/UbcH10 on APC/C substrates, enhancing the degradation of APC/C substrates by the proteasome and promoting mitotic exit. This is Ubiquitin-conjugating enzyme E2 S from Drosophila melanogaster (Fruit fly).